The chain runs to 80 residues: Putative membrane protein insertion efficiency factor (80 aa).

The tract at residues 61-80 (KTGKDPVPDRFSLKRNQEGE) is disordered. Residues 62–80 (TGKDPVPDRFSLKRNQEGE) show a composition bias toward basic and acidic residues.

It belongs to the UPF0161 family.

The protein localises to the cell membrane. Could be involved in insertion of integral membrane proteins into the membrane. The polypeptide is Putative membrane protein insertion efficiency factor (Streptococcus pneumoniae (strain P1031)).